The sequence spans 336 residues: Dihydroorotate dehydrogenase (quinone) (336 aa).

FMN-binding positions include 62–66 (AGLDK) and threonine 86. Lysine 66 is a binding site for substrate. 111–115 (NRMGF) contacts substrate. FMN-binding residues include asparagine 139 and asparagine 172. Asparagine 172 contributes to the substrate binding site. Serine 175 functions as the Nucleophile in the catalytic mechanism. Asparagine 177 contributes to the substrate binding site. FMN-binding residues include lysine 217 and threonine 245. 246 to 247 (NT) is a substrate binding site. Residues glycine 268, glycine 297, and 318–319 (YS) contribute to the FMN site.

This sequence belongs to the dihydroorotate dehydrogenase family. Type 2 subfamily. As to quaternary structure, monomer. FMN is required as a cofactor.

Its subcellular location is the cell membrane. The enzyme catalyses (S)-dihydroorotate + a quinone = orotate + a quinol. It participates in pyrimidine metabolism; UMP biosynthesis via de novo pathway; orotate from (S)-dihydroorotate (quinone route): step 1/1. Its function is as follows. Catalyzes the conversion of dihydroorotate to orotate with quinone as electron acceptor. This Escherichia coli (strain UTI89 / UPEC) protein is Dihydroorotate dehydrogenase (quinone).